A 290-amino-acid chain; its full sequence is Porphobilinogen deaminase (290 aa).

An S-(dipyrrolylmethanemethyl)cysteine modification is found at cysteine 237.

This sequence belongs to the HMBS family. In terms of assembly, monomer. Dipyrromethane serves as cofactor.

The catalysed reaction is 4 porphobilinogen + H2O = hydroxymethylbilane + 4 NH4(+). The protein operates within porphyrin-containing compound metabolism; protoporphyrin-IX biosynthesis; coproporphyrinogen-III from 5-aminolevulinate: step 2/4. Functionally, tetrapolymerization of the monopyrrole PBG into the hydroxymethylbilane pre-uroporphyrinogen in several discrete steps. The sequence is that of Porphobilinogen deaminase from Clostridium botulinum (strain Loch Maree / Type A3).